Here is an 851-residue protein sequence, read N- to C-terminus: Beta-galactosidase 3 (851 aa).

A signal peptide spans 1–29 (MAGASSYFSLRRLLLLLLPLVPLLGATTA). N-linked (GlcNAc...) asparagine glycosylation occurs at Asn-35. Residue Glu-194 is the Proton donor of the active site. Glu-263 functions as the Nucleophile in the catalytic mechanism. N-linked (GlcNAc...) asparagine glycosylation is found at Asn-361, Asn-475, Asn-528, and Asn-533. The 87-residue stretch at 765–851 (GRDAAKVQLS…KTLAIEADCS (87 aa)) folds into the SUEL-type lectin domain.

This sequence belongs to the glycosyl hydrolase 35 family.

The protein resides in the secreted. It is found in the extracellular space. It localises to the apoplast. It catalyses the reaction Hydrolysis of terminal non-reducing beta-D-galactose residues in beta-D-galactosides.. The chain is Beta-galactosidase 3 from Oryza sativa subsp. japonica (Rice).